Consider the following 255-residue polypeptide: 5'-nucleotidase SurE (255 aa).

A divalent metal cation-binding residues include Asp-8, Asp-9, Ser-39, and Asn-95.

It belongs to the SurE nucleotidase family. Requires a divalent metal cation as cofactor.

It localises to the cytoplasm. The enzyme catalyses a ribonucleoside 5'-phosphate + H2O = a ribonucleoside + phosphate. Nucleotidase that shows phosphatase activity on nucleoside 5'-monophosphates. The sequence is that of 5'-nucleotidase SurE from Rubrivivax gelatinosus (strain NBRC 100245 / IL144).